The following is a 273-amino-acid chain: Trypsin-6 (273 aa).

The signal sequence occupies residues 1 to 22 (MLSKFTAILLAVHIALFACALT). The propeptide at 23 to 46 (QAEKRHKLTRPAFHPNAPYLAGKR) is activation peptide. In terms of domain architecture, Peptidase S1 spans 47–272 (IVGGFVIDIS…VRDWIRETSG (226 aa)). Cys-72 and Cys-88 are disulfide-bonded. Residues His-87 and Asp-132 each act as charge relay system in the active site. Cystine bridges form between Cys-197–Cys-213 and Cys-224–Cys-248. The active-site Charge relay system is Ser-228.

The protein belongs to the peptidase S1 family. Expressed in the midgut. Expression levels drop a few hours after blood feeding and pick up again 28 hours later.

Its subcellular location is the secreted. The catalysed reaction is Preferential cleavage: Arg-|-Xaa, Lys-|-Xaa.. In terms of biological role, constitutive trypsin that is expressed 2 days after emergence, coinciding with host seeking behavior of the female. The polypeptide is Trypsin-6 (TRYP6) (Anopheles gambiae (African malaria mosquito)).